Consider the following 413-residue polypeptide: MSRRKQTNPNKVHWDQVFAGLEEQARQAMMKTDFPGDLGSQRQAIQQLRDQDSSSSDSEGDEEETTQDEVSSHTSEEDGGVVKVEKELETAEAPVSSGDALAEREVTENLNSDPLLQLCQCPLCQLDCGSREQLIAHVYQHTAAVVSAKSYMCPVCGRALSSPGSLGRHLLIHSEDQRSNCAVCGARFTSHATFNSEKLPQVLNMESVPQVHSEGPSSAEGKDIACSPPVYPAGILLVCNNCAAYRKLLETQTPSVRKWALRRQNEPLEVRLQRLERERTAKKSRRDNETPEEREVRRMRDREAKRLQRMQETDEQRARRLQRDREAMRLKRANETPEKRQARLIREREAKRLKRRLEKMDMMLRAQFGQDPSAMAALAAEMNFFQLPVSGVELDSQLLGKMAFEEQNNSSLH.

The segment at 26 to 83 (RQAMMKTDFPGDLGSQRQAIQQLRDQDSSSSDSEGDEEETTQDEVSSHTSEEDGGVVK) is disordered. The span at 58 to 67 (SEGDEEETTQ) shows a compositional bias: acidic residues. 2 C2H2-type zinc fingers span residues 117–141 (QLCQCPLCQLDCGSREQLIAHVYQH) and 151–173 (YMCPVCGRALSSPGSLGRHLLIH). Positions 260-367 (ALRRQNEPLE…EKMDMMLRAQ (108 aa)) form a coiled coil. The segment at 279-320 (RTAKKSRRDNETPEEREVRRMRDREAKRLQRMQETDEQRARR) is disordered.

Belongs to the krueppel C2H2-type zinc-finger protein family.

It is found in the nucleus. May be involved in transcriptional regulation. The protein is Zinc finger protein 821 (Znf821) of Mus musculus (Mouse).